The chain runs to 239 residues: Pyridoxine 5'-phosphate synthase (239 aa).

Asparagine 9 is a 3-amino-2-oxopropyl phosphate binding site. 1-deoxy-D-xylulose 5-phosphate is bound at residue 11 to 12 (DH). Arginine 20 serves as a coordination point for 3-amino-2-oxopropyl phosphate. The active-site Proton acceptor is the histidine 45. Arginine 47 and histidine 52 together coordinate 1-deoxy-D-xylulose 5-phosphate. Glutamate 72 serves as the catalytic Proton acceptor. Threonine 102 contributes to the 1-deoxy-D-xylulose 5-phosphate binding site. The active-site Proton donor is histidine 189. Residues glycine 190 and 211–212 (GH) each bind 3-amino-2-oxopropyl phosphate.

It belongs to the PNP synthase family. Homooctamer; tetramer of dimers.

It is found in the cytoplasm. The enzyme catalyses 3-amino-2-oxopropyl phosphate + 1-deoxy-D-xylulose 5-phosphate = pyridoxine 5'-phosphate + phosphate + 2 H2O + H(+). Its pathway is cofactor biosynthesis; pyridoxine 5'-phosphate biosynthesis; pyridoxine 5'-phosphate from D-erythrose 4-phosphate: step 5/5. Functionally, catalyzes the complicated ring closure reaction between the two acyclic compounds 1-deoxy-D-xylulose-5-phosphate (DXP) and 3-amino-2-oxopropyl phosphate (1-amino-acetone-3-phosphate or AAP) to form pyridoxine 5'-phosphate (PNP) and inorganic phosphate. This is Pyridoxine 5'-phosphate synthase from Ehrlichia chaffeensis (strain ATCC CRL-10679 / Arkansas).